Reading from the N-terminus, the 184-residue chain is Photosystem I assembly protein Ycf4 (184 aa).

2 consecutive transmembrane segments (helical) span residues Ile-19–Gly-39 and Ile-57–Ser-77.

It belongs to the Ycf4 family.

Its subcellular location is the plastid thylakoid membrane. Functionally, seems to be required for the assembly of the photosystem I complex. The protein is Photosystem I assembly protein Ycf4 of Cuscuta reflexa (Southern Asian dodder).